Consider the following 326-residue polypeptide: Vitamin B12 import system permease protein BtuC (326 aa).

9 helical membrane-spanning segments follow: residues 17 to 39 (LSLS…QWIA), 59 to 81 (RTLA…QALF), 88 to 107 (PGLL…AVLL), 111 to 133 (QLPG…LILL), 146 to 168 (LLAG…YFST), 188 to 205 (WQQS…IWIC), 242 to 264 (MVGV…PHIL), 274 to 296 (VLLP…VARL), and 303 to 322 (LPIG…WLLL).

It belongs to the binding-protein-dependent transport system permease family. FecCD subfamily. The complex is composed of two ATP-binding proteins (BtuD), two transmembrane proteins (BtuC) and a solute-binding protein (BtuF).

It is found in the cell inner membrane. Its function is as follows. Part of the ABC transporter complex BtuCDF involved in vitamin B12 import. Involved in the translocation of the substrate across the membrane. The protein is Vitamin B12 import system permease protein BtuC of Salmonella typhi.